Consider the following 457-residue polypeptide: Adenylosuccinate synthetase (457 aa).

GTP contacts are provided by residues 40–46 (GDEGKGK) and 70–72 (GHT). Asp-41 acts as the Proton acceptor in catalysis. 2 residues coordinate Mg(2+): Asp-41 and Gly-70. IMP contacts are provided by residues 41–44 (DEGK), 68–71 (NAGH), Thr-161, Arg-175, Asn-255, Thr-270, and Arg-334. Residue His-71 is the Proton donor of the active site. A substrate-binding site is contributed by 330-336 (VTTGRKR). Residues Arg-336, 362-364 (KLD), and 444-446 (GVG) contribute to the GTP site.

The protein belongs to the adenylosuccinate synthetase family. Homodimer. Mg(2+) is required as a cofactor.

It localises to the cytoplasm. The catalysed reaction is IMP + L-aspartate + GTP = N(6)-(1,2-dicarboxyethyl)-AMP + GDP + phosphate + 2 H(+). It functions in the pathway purine metabolism; AMP biosynthesis via de novo pathway; AMP from IMP: step 1/2. In terms of biological role, plays an important role in the de novo pathway and in the salvage pathway of purine nucleotide biosynthesis. Catalyzes the first committed step in the biosynthesis of AMP from IMP. The sequence is that of Adenylosuccinate synthetase from Caenorhabditis elegans.